Here is a 206-residue protein sequence, read N- to C-terminus: Large ribosomal subunit protein uL4 (206 aa).

The disordered stretch occupies residues 63–93 (MYKQKGTGRARHHSARAPQFRGGGKAHGPVV). A compositionally biased stretch (basic residues) spans 64-77 (YKQKGTGRARHHSA).

The protein belongs to the universal ribosomal protein uL4 family. Part of the 50S ribosomal subunit.

Its function is as follows. One of the primary rRNA binding proteins, this protein initially binds near the 5'-end of the 23S rRNA. It is important during the early stages of 50S assembly. It makes multiple contacts with different domains of the 23S rRNA in the assembled 50S subunit and ribosome. In terms of biological role, forms part of the polypeptide exit tunnel. The sequence is that of Large ribosomal subunit protein uL4 from Sinorhizobium fredii (strain NBRC 101917 / NGR234).